An 896-amino-acid chain; its full sequence is Protein translocase subunit SecA (896 aa).

ATP-binding positions include Gln-87, 105–109 (GEGKT), and Asp-512. Disordered regions lie at residues 565–584 (RRID…PGSS) and 840–896 (EAAQ…AHEA). The Zn(2+) site is built by Cys-876, Cys-878, Cys-887, and His-888. Over residues 882 to 896 (KKYKHCHGNRAAHEA) the composition is skewed to basic residues.

This sequence belongs to the SecA family. As to quaternary structure, monomer and homodimer. Part of the essential Sec protein translocation apparatus which comprises SecA, SecYEG and auxiliary proteins SecDF-YajC and YidC. It depends on Zn(2+) as a cofactor.

The protein localises to the cell inner membrane. It is found in the cytoplasm. It carries out the reaction ATP + H2O + cellular proteinSide 1 = ADP + phosphate + cellular proteinSide 2.. Part of the Sec protein translocase complex. Interacts with the SecYEG preprotein conducting channel. Has a central role in coupling the hydrolysis of ATP to the transfer of proteins into and across the cell membrane, serving both as a receptor for the preprotein-SecB complex and as an ATP-driven molecular motor driving the stepwise translocation of polypeptide chains across the membrane. The chain is Protein translocase subunit SecA from Mannheimia succiniciproducens (strain KCTC 0769BP / MBEL55E).